We begin with the raw amino-acid sequence, 359 residues long: Holliday junction branch migration complex subunit RuvB (359 aa).

The segment at 1 to 187 (MSGLEHGDAS…FGFTAHLEFY (187 aa)) is large ATPase domain (RuvB-L). Residues leucine 26, arginine 27, glycine 68, lysine 71, threonine 72, threonine 73, 134–136 (EDY), arginine 177, tyrosine 187, and arginine 224 contribute to the ATP site. A Mg(2+)-binding site is contributed by threonine 72. Residues 188–257 (ETHELEQVIE…SVRAALDLYD (70 aa)) are small ATPAse domain (RuvB-S). The interval 260-359 (PLGLDRLDRA…VAGALFGDEL (100 aa)) is head domain (RuvB-H). DNA-binding residues include arginine 315 and arginine 320.

The protein belongs to the RuvB family. Homohexamer. Forms an RuvA(8)-RuvB(12)-Holliday junction (HJ) complex. HJ DNA is sandwiched between 2 RuvA tetramers; dsDNA enters through RuvA and exits via RuvB. An RuvB hexamer assembles on each DNA strand where it exits the tetramer. Each RuvB hexamer is contacted by two RuvA subunits (via domain III) on 2 adjacent RuvB subunits; this complex drives branch migration. In the full resolvosome a probable DNA-RuvA(4)-RuvB(12)-RuvC(2) complex forms which resolves the HJ.

The protein resides in the cytoplasm. It catalyses the reaction ATP + H2O = ADP + phosphate + H(+). Its function is as follows. The RuvA-RuvB-RuvC complex processes Holliday junction (HJ) DNA during genetic recombination and DNA repair, while the RuvA-RuvB complex plays an important role in the rescue of blocked DNA replication forks via replication fork reversal (RFR). RuvA specifically binds to HJ cruciform DNA, conferring on it an open structure. The RuvB hexamer acts as an ATP-dependent pump, pulling dsDNA into and through the RuvAB complex. RuvB forms 2 homohexamers on either side of HJ DNA bound by 1 or 2 RuvA tetramers; 4 subunits per hexamer contact DNA at a time. Coordinated motions by a converter formed by DNA-disengaged RuvB subunits stimulates ATP hydrolysis and nucleotide exchange. Immobilization of the converter enables RuvB to convert the ATP-contained energy into a lever motion, pulling 2 nucleotides of DNA out of the RuvA tetramer per ATP hydrolyzed, thus driving DNA branch migration. The RuvB motors rotate together with the DNA substrate, which together with the progressing nucleotide cycle form the mechanistic basis for DNA recombination by continuous HJ branch migration. Branch migration allows RuvC to scan DNA until it finds its consensus sequence, where it cleaves and resolves cruciform DNA. The polypeptide is Holliday junction branch migration complex subunit RuvB (Clavibacter michiganensis subsp. michiganensis (strain NCPPB 382)).